The primary structure comprises 151 residues: Phosphoribosyl-AMP cyclohydrolase (151 aa).

Aspartate 94 contacts Mg(2+). Position 95 (cysteine 95) interacts with Zn(2+). Residues aspartate 96 and aspartate 98 each contribute to the Mg(2+) site. Residues cysteine 112 and cysteine 119 each contribute to the Zn(2+) site.

Belongs to the PRA-CH family. In terms of assembly, homodimer. The cofactor is Mg(2+). Zn(2+) is required as a cofactor.

The protein localises to the cytoplasm. It carries out the reaction 1-(5-phospho-beta-D-ribosyl)-5'-AMP + H2O = 1-(5-phospho-beta-D-ribosyl)-5-[(5-phospho-beta-D-ribosylamino)methylideneamino]imidazole-4-carboxamide. The protein operates within amino-acid biosynthesis; L-histidine biosynthesis; L-histidine from 5-phospho-alpha-D-ribose 1-diphosphate: step 3/9. Functionally, catalyzes the hydrolysis of the adenine ring of phosphoribosyl-AMP. The polypeptide is Phosphoribosyl-AMP cyclohydrolase (Rhodopseudomonas palustris (strain TIE-1)).